The chain runs to 384 residues: 5-amino-6-(D-ribitylamino)uracil--L-tyrosine 4-hydroxyphenyl transferase 2 (384 aa).

The Radical SAM core domain occupies 53-286 (VSYVVNRNIY…IAISRVILHT (234 aa)). Cys-67, Cys-71, and Cys-74 together coordinate [4Fe-4S] cluster.

This sequence belongs to the radical SAM superfamily. CofH family. In terms of assembly, consists of two subunits, CofG and CofH. The cofactor is [4Fe-4S] cluster.

It carries out the reaction 5-amino-6-(D-ribitylamino)uracil + L-tyrosine + S-adenosyl-L-methionine = 5-amino-5-(4-hydroxybenzyl)-6-(D-ribitylimino)-5,6-dihydrouracil + 2-iminoacetate + 5'-deoxyadenosine + L-methionine + H(+). Its pathway is cofactor biosynthesis; coenzyme F0 biosynthesis. Functionally, catalyzes the radical-mediated synthesis of 5-amino-5-(4-hydroxybenzyl)-6-(D-ribitylimino)-5,6-dihydrouracil from 5-amino-6-(D-ribitylamino)uracil and L-tyrosine. The chain is 5-amino-6-(D-ribitylamino)uracil--L-tyrosine 4-hydroxyphenyl transferase 2 from Methanosarcina barkeri (strain Fusaro / DSM 804).